Consider the following 138-residue polypeptide: Small ribosomal subunit protein uS11c (138 aa).

Residues 1 to 23 (MAKPIPRIGSRRNGRISSRKSTR) are disordered. Residues 9 to 23 (GSRRNGRISSRKSTR) are compositionally biased toward basic residues.

The protein belongs to the universal ribosomal protein uS11 family. As to quaternary structure, part of the 30S ribosomal subunit.

It localises to the plastid. The protein localises to the chloroplast. The protein is Small ribosomal subunit protein uS11c of Cucumis sativus (Cucumber).